A 1126-amino-acid polypeptide reads, in one-letter code: DNA-directed RNA polymerase subunit Rpo2 (1126 aa).

Residues C1060, C1063, C1078, and H1081 each contribute to the Zn(2+) site.

The protein belongs to the RNA polymerase beta chain family. Part of the 13-subunit RNA polymerase complex. Interacts with TFS4. As to quaternary structure, (Microbial infection) Binds viral protein RIP which blocks global transcription. Zn(2+) is required as a cofactor.

Its subcellular location is the cytoplasm. It carries out the reaction RNA(n) + a ribonucleoside 5'-triphosphate = RNA(n+1) + diphosphate. Functionally, DNA-dependent RNA polymerase (RNAP) catalyzes the transcription of DNA into RNA using the four ribonucleoside triphosphates as substrates. This subunit is involved in DNA promoter recognition. The protein is DNA-directed RNA polymerase subunit Rpo2 of Sulfolobus acidocaldarius (strain ATCC 33909 / DSM 639 / JCM 8929 / NBRC 15157 / NCIMB 11770).